Reading from the N-terminus, the 509-residue chain is Heat shock 70 kDa protein 14 (509 aa).

This sequence belongs to the heat shock protein 70 family. Component of ribosome-associated complex (RAC), a heterodimer composed of Hsp70/DnaK-type chaperone HSPA14 and Hsp40/DnaJ-type chaperone DNAJC2.

It is found in the cytoplasm. It localises to the cytosol. Component of the ribosome-associated complex (RAC), a complex involved in folding or maintaining nascent polypeptides in a folding-competent state. In the RAC complex, binds to the nascent polypeptide chain, while DNAJC2 stimulates its ATPase activity. This Rattus norvegicus (Rat) protein is Heat shock 70 kDa protein 14 (Hspa14).